The sequence spans 134 residues: Probable glycine cleavage system H protein (134 aa).

The Lipoyl-binding domain maps to 29-110; it reads TVLVGITDYA…PYEAWIAKIK (82 aa). N6-lipoyllysine is present on Lys70.

It belongs to the GcvH family. As to quaternary structure, the glycine cleavage system is composed of four proteins: P, T, L and H. (R)-lipoate serves as cofactor.

In terms of biological role, the glycine cleavage system catalyzes the degradation of glycine. The H protein shuttles the methylamine group of glycine from the P protein to the T protein. This Pyrococcus furiosus (strain ATCC 43587 / DSM 3638 / JCM 8422 / Vc1) protein is Probable glycine cleavage system H protein.